A 126-amino-acid polypeptide reads, in one-letter code: Anti-adapter protein IraD (126 aa).

This sequence belongs to the GpW/Gp25 family. IraD subfamily. In terms of assembly, interacts with RssB.

It is found in the cytoplasm. Its function is as follows. Inhibits RpoS proteolysis by regulating RssB activity, thereby increasing the stability of the sigma stress factor RpoS during oxidative stress. Its effect on RpoS stability is due to its interaction with RssB, which probably blocks the interaction of RssB with RpoS, and the consequent delivery of the RssB-RpoS complex to the ClpXP protein degradation pathway. The chain is Anti-adapter protein IraD from Salmonella arizonae (strain ATCC BAA-731 / CDC346-86 / RSK2980).